The primary structure comprises 446 residues: Probable D-serine dehydratase (446 aa).

Residue K118 is modified to N6-(pyridoxal phosphate)lysine.

It belongs to the serine/threonine dehydratase family. DsdA subfamily. The cofactor is pyridoxal 5'-phosphate.

It carries out the reaction D-serine = pyruvate + NH4(+). In Ectopseudomonas mendocina (strain ymp) (Pseudomonas mendocina), this protein is Probable D-serine dehydratase.